The sequence spans 610 residues: Aspartate--tRNA(Asp/Asn) ligase (610 aa).

Glutamate 177 is an L-aspartate binding site. Residues 201–204 (QLFK) are aspartate. Arginine 223 lines the L-aspartate pocket. ATP is bound by residues 223-225 (RDE) and glutamine 232. Residue histidine 461 coordinates L-aspartate. Glutamate 499 is an ATP binding site. An L-aspartate-binding site is contributed by arginine 506. 551-554 (GVDR) is a binding site for ATP.

It belongs to the class-II aminoacyl-tRNA synthetase family. Type 1 subfamily. In terms of assembly, homodimer.

The protein localises to the cytoplasm. The catalysed reaction is tRNA(Asx) + L-aspartate + ATP = L-aspartyl-tRNA(Asx) + AMP + diphosphate. Its function is as follows. Aspartyl-tRNA synthetase with relaxed tRNA specificity since it is able to aspartylate not only its cognate tRNA(Asp) but also tRNA(Asn). Reaction proceeds in two steps: L-aspartate is first activated by ATP to form Asp-AMP and then transferred to the acceptor end of tRNA(Asp/Asn). This is Aspartate--tRNA(Asp/Asn) ligase from Parasynechococcus marenigrum (strain WH8102).